We begin with the raw amino-acid sequence, 1812 residues long: Replicase large subunit (1812 aa).

Positions 58–820 are methyltransferase; it reads KRNLNEDQIQ…WAQMVEDSEV (763 aa). In terms of domain architecture, Alphavirus-like MT spans 79–306; that stretch reads VTSSVHRGTH…HNLNSLMLYV (228 aa). Residues 543-573 adopt a coiled-coil conformation; sequence SELDEKVSLYEEYERERQRISDEIVSEKIGL. Residues 701–738 form a disordered region; sequence QVEQDWPIGNLPDVDPDDSASAQVCLTESASTSSDEDC. Positions 720 to 733 are enriched in polar residues; the sequence is ASAQVCLTESASTS. One can recognise a (+)RNA virus helicase ATP-binding domain in the interval 979 to 1140; the sequence is CDITFLMNEI…KLEIDNVVEK (162 aa). The segment at 1010–1272 is helicase; the sequence is TLVDGVPGCG…RHRRSLVYYT (263 aa). 1014–1021 lines the ATP pocket; it reads GVPGCGKS. The (+)RNA virus helicase C-terminal domain occupies 1141-1303; it reads RLTYRSPLDV…MKHLHEEGVK (163 aa). A RdRp catalytic domain is found at 1565–1678; sequence HESVEIDFSK…FFPKGMVIED (114 aa).

It belongs to the ssRNA positive-strand viruses RNA-directed RNA polymerase family. Heterodimer of a large and a small subunit.

It catalyses the reaction RNA(n) + a ribonucleoside 5'-triphosphate = RNA(n+1) + diphosphate. It carries out the reaction ATP + H2O = ADP + phosphate + H(+). Is an RNA-dependent RNA polymerase active in viral RNA replication. In terms of biological role, is a methyltransferase active in RNA capping and an RNA helicase. Methyltransferase displays a cytoplasmic capping enzyme activity. This function is necessary since all viral RNAs are synthesized in the cytoplasm, and host capping enzymes are restricted to the nucleus. Helicase region probably exhibits NTPase and RNA unwinding activities (Potential). This Potato mop-top virus (isolate Potato/Sweden/Sw) (PMTV) protein is Replicase large subunit (rep).